The sequence spans 405 residues: Glyceraldehyde-3-phosphate dehydrogenase A, chloroplastic (405 aa).

The transit peptide at 1–68 directs the protein to the chloroplast; it reads MASATFSVAK…GHKKSLVVEA (68 aa). Residues 80 to 81, Asp104, and Arg149 contribute to the NADP(+) site; that span reads RI. Residues 221 to 223, Thr252, Arg267, 280 to 281, and Arg303 contribute to the D-glyceraldehyde 3-phosphate site; these read SCT and TG. Cys222 (nucleophile) is an active-site residue. Asn385 serves as a coordination point for NADP(+).

Belongs to the glyceraldehyde-3-phosphate dehydrogenase family. Tetramer of either four A chains (GAPDH 2) or two A and two B chains (GAPDH 1).

The protein resides in the plastid. It is found in the chloroplast. The enzyme catalyses D-glyceraldehyde 3-phosphate + phosphate + NADP(+) = (2R)-3-phospho-glyceroyl phosphate + NADPH + H(+). It participates in carbohydrate biosynthesis; Calvin cycle. The sequence is that of Glyceraldehyde-3-phosphate dehydrogenase A, chloroplastic (GAPA) from Pisum sativum (Garden pea).